Consider the following 146-residue polypeptide: Small ribosomal subunit protein uS5 (146 aa).

Residues 8–71 (FSEVVVNIGR…DDAFKNIIKV (64 aa)) enclose the S5 DRBM domain.

The protein belongs to the universal ribosomal protein uS5 family. Part of the 30S ribosomal subunit. Contacts proteins S4 and S8.

In terms of biological role, with S4 and S12 plays an important role in translational accuracy. Functionally, located at the back of the 30S subunit body where it stabilizes the conformation of the head with respect to the body. The protein is Small ribosomal subunit protein uS5 of Helicobacter hepaticus (strain ATCC 51449 / 3B1).